Consider the following 58-residue polypeptide: Photosystem II reaction center protein K (58 aa).

The propeptide occupies 1-21 (MTVSYSIYLENSLHFGDALLA). A helical membrane pass occupies residues 29-49 (IFDPIVDVMPVIPVFFLLLAF).

The protein belongs to the PsbK family. PSII is composed of 1 copy each of membrane proteins PsbA, PsbB, PsbC, PsbD, PsbE, PsbF, PsbH, PsbI, PsbJ, PsbK, PsbL, PsbM, PsbT, PsbX, PsbY, PsbZ, Psb30/Ycf12, at least 3 peripheral proteins of the oxygen-evolving complex and a large number of cofactors. It forms dimeric complexes.

It is found in the plastid. The protein localises to the chloroplast thylakoid membrane. Its function is as follows. One of the components of the core complex of photosystem II (PSII). PSII is a light-driven water:plastoquinone oxidoreductase that uses light energy to abstract electrons from H(2)O, generating O(2) and a proton gradient subsequently used for ATP formation. It consists of a core antenna complex that captures photons, and an electron transfer chain that converts photonic excitation into a charge separation. The protein is Photosystem II reaction center protein K of Adiantum capillus-veneris (Maidenhair fern).